We begin with the raw amino-acid sequence, 947 residues long: Vacuolar membrane protease (947 aa).

Over methionine 1–lysine 15 the chain is Cytoplasmic. A helical membrane pass occupies residues threonine 16 to aspartate 36. The Vacuolar segment spans residues arginine 37 to lysine 358. Asparagine 46, asparagine 92, asparagine 108, and asparagine 121 each carry an N-linked (GlcNAc...) asparagine glycan. Residues histidine 156 and aspartate 168 each coordinate Zn(2+). Glutamate 200 (proton acceptor) is an active-site residue. Residues glutamate 201, glutamate 226, and histidine 300 each coordinate Zn(2+). Asparagine 319 is a glycosylation site (N-linked (GlcNAc...) asparagine). Residues histidine 359–alanine 379 form a helical membrane-spanning segment. Topologically, residues histidine 380–arginine 391 are cytoplasmic. Residues leucine 392–threonine 412 form a helical membrane-spanning segment. Residues lysine 413–arginine 428 lie on the Vacuolar side of the membrane. Residues threonine 429–alanine 449 form a helical membrane-spanning segment. Over glutamate 450 to tyrosine 458 the chain is Cytoplasmic. A helical transmembrane segment spans residues lysine 459 to leucine 479. Over arginine 480–threonine 489 the chain is Vacuolar. The chain crosses the membrane as a helical span at residues glycine 490–phenylalanine 510. Residues glycine 511–tyrosine 601 are Cytoplasmic-facing. Composition is skewed to polar residues over residues asparagine 522–glutamine 531 and asparagine 546–histidine 567. Positions asparagine 522–valine 573 are disordered. A helical membrane pass occupies residues asparagine 602–leucine 622. The Vacuolar portion of the chain corresponds to aspartate 623–glutamine 641. A helical membrane pass occupies residues leucine 642–isoleucine 662. Residues serine 663–serine 669 lie on the Cytoplasmic side of the membrane. The chain crosses the membrane as a helical span at residues serine 670–phenylalanine 690. The Vacuolar portion of the chain corresponds to serine 691–leucine 947. Asparagine 742, asparagine 784, asparagine 801, and asparagine 833 each carry an N-linked (GlcNAc...) asparagine glycan.

Belongs to the peptidase M28 family. Requires Zn(2+) as cofactor.

It localises to the vacuole membrane. Functionally, may be involved in vacuolar sorting and osmoregulation. The chain is Vacuolar membrane protease from Candida glabrata (strain ATCC 2001 / BCRC 20586 / JCM 3761 / NBRC 0622 / NRRL Y-65 / CBS 138) (Yeast).